Reading from the N-terminus, the 585-residue chain is Formate--tetrahydrofolate ligase (585 aa).

74–81 (TPLGEGKT) is a binding site for ATP.

The protein belongs to the formate--tetrahydrofolate ligase family.

The catalysed reaction is (6S)-5,6,7,8-tetrahydrofolate + formate + ATP = (6R)-10-formyltetrahydrofolate + ADP + phosphate. It participates in one-carbon metabolism; tetrahydrofolate interconversion. This is Formate--tetrahydrofolate ligase from Yersinia enterocolitica serotype O:8 / biotype 1B (strain NCTC 13174 / 8081).